The primary structure comprises 216 residues: Hydrogenase-4 component E (216 aa).

At 1–3 (MTG) the chain is on the periplasmic side. Residues 4–24 (SMIVNNLAGLMMLTSLFVISV) form a helical membrane-spanning segment. Over 25 to 38 (KSYRLSCGFYACQS) the chain is Cytoplasmic. A run of 2 helical transmembrane segments spans residues 39–59 (LVLV…QLLI) and 60–80 (WSAS…TYAA). The Cytoplasmic segment spans residues 81–92 (RNIPQNIPEKAL). Residues 93–113 (FGPAMMALLAALIVLLCAFVV) form a helical membrane-spanning segment. The Periplasmic portion of the chain corresponds to 114–122 (QPVKLPMAT). Residues 123-143 (GLKPALAVALGHFLLGLLCIV) traverse the membrane as a helical segment. The Cytoplasmic segment spans residues 144 to 150 (SQRNILR). A helical transmembrane segment spans residues 151–171 (QIFGYCLMENGSHLVLALLAW). At 172–175 (RAPE) the chain is on the periplasmic side. A helical transmembrane segment spans residues 176–196 (LVEIGIATDAIFAVIVMVLLA). At 197–216 (RKIWRTHGTLDVNNLTALKG) the chain is on the cytoplasmic side.

It is found in the cell inner membrane. This Escherichia coli O157:H7 protein is Hydrogenase-4 component E (hyfE).